We begin with the raw amino-acid sequence, 325 residues long: Ribosomal RNA small subunit methyltransferase H (325 aa).

S-adenosyl-L-methionine-binding positions include 45-47 (GGH), aspartate 65, tyrosine 92, aspartate 113, and glutamine 120.

This sequence belongs to the methyltransferase superfamily. RsmH family.

Its subcellular location is the cytoplasm. It carries out the reaction cytidine(1402) in 16S rRNA + S-adenosyl-L-methionine = N(4)-methylcytidine(1402) in 16S rRNA + S-adenosyl-L-homocysteine + H(+). Functionally, specifically methylates the N4 position of cytidine in position 1402 (C1402) of 16S rRNA. This Oleidesulfovibrio alaskensis (strain ATCC BAA-1058 / DSM 17464 / G20) (Desulfovibrio alaskensis) protein is Ribosomal RNA small subunit methyltransferase H.